The sequence spans 217 residues: Ribosomal RNA small subunit methyltransferase G (217 aa).

Residues G76, F81, 128 to 129, and R142 each bind S-adenosyl-L-methionine; that span reads LE.

The protein belongs to the methyltransferase superfamily. RNA methyltransferase RsmG family.

The protein resides in the cytoplasm. It carries out the reaction guanosine(527) in 16S rRNA + S-adenosyl-L-methionine = N(7)-methylguanosine(527) in 16S rRNA + S-adenosyl-L-homocysteine. In terms of biological role, specifically methylates the N7 position of guanine in position 527 of 16S rRNA. This chain is Ribosomal RNA small subunit methyltransferase G, found in Rhizorhabdus wittichii (strain DSM 6014 / CCUG 31198 / JCM 15750 / NBRC 105917 / EY 4224 / RW1) (Sphingomonas wittichii).